A 422-amino-acid polypeptide reads, in one-letter code: Glutamate-1-semialdehyde 2,1-aminomutase (422 aa).

Lys-258 carries the post-translational modification N6-(pyridoxal phosphate)lysine.

This sequence belongs to the class-III pyridoxal-phosphate-dependent aminotransferase family. HemL subfamily. As to quaternary structure, homodimer. It depends on pyridoxal 5'-phosphate as a cofactor.

The protein resides in the cytoplasm. The catalysed reaction is (S)-4-amino-5-oxopentanoate = 5-aminolevulinate. Its pathway is porphyrin-containing compound metabolism; protoporphyrin-IX biosynthesis; 5-aminolevulinate from L-glutamyl-tRNA(Glu): step 2/2. The polypeptide is Glutamate-1-semialdehyde 2,1-aminomutase (Chlamydia trachomatis serovar L2 (strain ATCC VR-902B / DSM 19102 / 434/Bu)).